The sequence spans 182 residues: Peptidoglycan-recognition protein SB2 (182 aa).

Residues 1–17 form the signal peptide; sequence MKLQLALVLCGLTLALG. An N-acetylmuramoyl-L-alanine amidase domain is found at 40 to 165; sequence PVRLIIIHHT…CQTKATACPG (126 aa). His47 lines the Zn(2+) pocket. Cys54 and Cys60 form a disulfide bridge. A glycan (N-linked (GlcNAc...) asparagine) is linked at Asn149. Residues His155 and Cys163 each coordinate Zn(2+).

It belongs to the N-acetylmuramoyl-L-alanine amidase 2 family. Zn(2+) serves as cofactor.

Its subcellular location is the secreted. It carries out the reaction Hydrolyzes the link between N-acetylmuramoyl residues and L-amino acid residues in certain cell-wall glycopeptides.. Its function is as follows. N-acetylmuramyl-L-alanine amidase involved in innate immunity by degrading bacterial peptidoglycans (PGN). Probably plays a scavenger role by digesting biologically active PGN into biologically inactive fragments. Has no direct bacteriolytic activity. This is Peptidoglycan-recognition protein SB2 (PGRP-SB2) from Drosophila melanogaster (Fruit fly).